The sequence spans 138 residues: Acid shock protein (138 aa).

Residues 1–21 (MKKVLALIVAATMGLSSVAFA) form the signal peptide. Positions 22-85 (ADAVAPAAAA…TKKAPAQKAQ (64 aa)) are excised as a propeptide. Positions 31–50 (APAATTTAAPAAAATKAPAK) are enriched in low complexity. Residues 31–138 (APAATTTAAP…ATKKAAPAAK (108 aa)) are disordered. Basic residues-rich tracts occupy residues 51–77 (ATHH…KATK) and 122–131 (AAKKHHKATK).

The protein belongs to the Asr family. Proteolytic processing gives rise to the active protein.

The protein resides in the periplasm. Its function is as follows. Required for growth and/or survival at acidic conditions. The chain is Acid shock protein from Serratia proteamaculans (strain 568).